The sequence spans 634 residues: Serine/threonine kinase NLK (634 aa).

In terms of domain architecture, Protein kinase spans 240–531 (SQPDRPIGYG…VEEALQHRYL (292 aa)). ATP is bound by residues 246-254 (IGYGAFGVV) and Lys-269. Asp-366 serves as the catalytic Proton acceptor.

It belongs to the protein kinase superfamily. CMGC Ser/Thr protein kinase family. MAP kinase subfamily. As to quaternary structure, component of the beta-catenin-lit-1 complex (also called the lit-1/wrm-1 complex or the wrm-1/lit-1 kinase complex) at least composed of lit-1 and wrm-1. Interacts with wrm-1 (via N-terminus); the interaction is direct and activates lit-1 kinase activity which leads to the phosphorylation of pop-1. This promotes pop-1 interaction with par-5 and translocation of pop-1 from the nucleus to the cytoplasm. Interacts with pop-1 (when phosphorylated on 'Ser-118' and 'Ser-127'); the interaction is dependent on the beta-catenin-lit-1 complex. The cofactor is Mg(2+). Expressed in the pharynx and seam and vulval cells.

The protein localises to the cytoplasm. It localises to the cell cortex. Its subcellular location is the nucleus. It carries out the reaction L-seryl-[protein] + ATP = O-phospho-L-seryl-[protein] + ADP + H(+). The enzyme catalyses L-threonyl-[protein] + ATP = O-phospho-L-threonyl-[protein] + ADP + H(+). In terms of biological role, has a role in the Wnt signaling pathway controlling the asymmetry of cell divisions during embryogenesis. Operates in the AB and EMS cell lineages influencing cell specification. Required for body wall muscle development, endoderm development, pop-1 asymmetry and T-cell division asymmetry. Component of the beta-catenin-lit-1 complex which promotes the phosphorylation, down-regulation and subcellular relocation of pop-1. Regulates plp-1 nuclear localization in embryos. Plays a role in male tail tip morphogenesis. This Caenorhabditis elegans protein is Serine/threonine kinase NLK.